The primary structure comprises 163 residues: Nucleotide-binding protein Acel_0286 (163 aa).

This sequence belongs to the YajQ family.

Its function is as follows. Nucleotide-binding protein. The sequence is that of Nucleotide-binding protein Acel_0286 from Acidothermus cellulolyticus (strain ATCC 43068 / DSM 8971 / 11B).